The chain runs to 400 residues: Telomere repeat-binding protein 6 (400 aa).

A Ubiquitin-like domain is found at 173–252 (VKFGIKSLNI…DDENLGSLGF (80 aa)). Residues 310–369 (VQRRIRRPFTVSEVEALVQAVERLGTGRWRDVKSHAFNHVNHRTYVDLKDKWKTLVHTAK) enclose the HTH myb-type domain. Positions 338 to 365 (WRDVKSHAFNHVNHRTYVDLKDKWKTLV) form a DNA-binding region, H-T-H motif.

In terms of assembly, homodimer. Expressed ubiquitously.

It localises to the nucleus. Its function is as follows. Binds specifically to the plant telomeric double-stranded DNA sequences. At least 4 repeats of telomeric sequences are required for binding. This chain is Telomere repeat-binding protein 6 (TRP6), found in Arabidopsis thaliana (Mouse-ear cress).